The following is a 129-amino-acid chain: Glycine cleavage system H protein (129 aa).

The Lipoyl-binding domain maps to 24–106; the sequence is TYTVGITEHA…YADGWIFKIK (83 aa). Lys65 carries the N6-lipoyllysine modification.

Belongs to the GcvH family. As to quaternary structure, the glycine cleavage system is composed of four proteins: P, T, L and H. The cofactor is (R)-lipoate.

The glycine cleavage system catalyzes the degradation of glycine. The H protein shuttles the methylamine group of glycine from the P protein to the T protein. The polypeptide is Glycine cleavage system H protein (Salmonella arizonae (strain ATCC BAA-731 / CDC346-86 / RSK2980)).